We begin with the raw amino-acid sequence, 262 residues long: MAVLSMKQLLEAGVHFGHQTRRWNPKMKPYIFTERNGIYIIDLQKTVKMIDDAYNFVKEEAQNGGVFLFVGTKKQAQDAIAEEATRAGQYYVNHRWLGGTLTNWNTIQTRIKRLKDIKKMATDGTFDVLPKKEVSLLKKQQDKLEKFLGGIEDMPRIPDVLFIVDPRKEKIAVQEAQKLNIPIVAMVDTNTDPDDIDVIIPSNDDAIRAVRLITSKMADAIIEGNQGEDQDDAQEQQVAADKKADSMEDIVEAVEGDNKSAK.

A disordered region spans residues 224-246 (GNQGEDQDDAQEQQVAADKKADS).

It belongs to the universal ribosomal protein uS2 family.

The protein is Small ribosomal subunit protein uS2 of Lacticaseibacillus casei (strain BL23) (Lactobacillus casei).